We begin with the raw amino-acid sequence, 431 residues long: Argininosuccinate lyase (431 aa).

This sequence belongs to the lyase 1 family. Argininosuccinate lyase subfamily.

The protein resides in the cytoplasm. The catalysed reaction is 2-(N(omega)-L-arginino)succinate = fumarate + L-arginine. Its pathway is amino-acid biosynthesis; L-arginine biosynthesis; L-arginine from L-ornithine and carbamoyl phosphate: step 3/3. In Stenotrophomonas maltophilia (strain R551-3), this protein is Argininosuccinate lyase.